Here is a 208-residue protein sequence, read N- to C-terminus: Probable GTP-binding protein EngB (208 aa).

The region spanning 22–195 (GLPEIALAGR…WHSIEEIFIA (174 aa)) is the EngB-type G domain. GTP is bound by residues 30–37 (GRSNVGKS), 57–61 (GKTRT), 75–78 (DLPG), 142–145 (TKSD), and 174–176 (ISS). Mg(2+)-binding residues include Ser37 and Thr59.

Belongs to the TRAFAC class TrmE-Era-EngA-EngB-Septin-like GTPase superfamily. EngB GTPase family. Mg(2+) is required as a cofactor.

In terms of biological role, necessary for normal cell division and for the maintenance of normal septation. The chain is Probable GTP-binding protein EngB from Alkaliphilus oremlandii (strain OhILAs) (Clostridium oremlandii (strain OhILAs)).